Here is a 139-residue protein sequence, read N- to C-terminus: Small ribosomal subunit protein uS12m (139 aa).

A mitochondrion-targeting transit peptide spans Met1–Ser29. Residues Met36–Arg56 form a disordered region.

Belongs to the universal ribosomal protein uS12 family. As to quaternary structure, component of the mitochondrial ribosome small subunit (28S) which comprises a 12S rRNA and about 30 distinct proteins.

It localises to the mitochondrion. The protein is Small ribosomal subunit protein uS12m (MRPS12) of Pongo abelii (Sumatran orangutan).